The sequence spans 415 residues: WD-40 repeat-containing protein MSI2 (415 aa).

WD repeat units follow at residues 166-206 (GHDK…QDKV), 215-255 (GHES…MQHQ), 258-298 (VHER…APLH), 302-342 (SHEG…EEQL), and 361-401 (GHKA…YRDE). The DWD box motif lies at 232 to 248 (LFGSAGEDGRLVIWDTR).

The protein belongs to the WD repeat RBAP46/RBAP48/MSI1 family.

It localises to the nucleus. In terms of biological role, core histone-binding subunit that may target chromatin assembly factors, chromatin remodeling factors and histone deacetylases to their histone substrates in a manner that is regulated by nucleosomal DNA. This chain is WD-40 repeat-containing protein MSI2 (MSI2), found in Arabidopsis thaliana (Mouse-ear cress).